The sequence spans 296 residues: 2-dehydropantoate 2-reductase (296 aa).

NADP(+) contacts are provided by residues 7–12, N94, and A120; that span reads GPGAVG. Residue N94 coordinates substrate. The active-site Proton donor is K175. Substrate-binding residues include N179, N183, N193, and S245. E257 contributes to the NADP(+) binding site.

The protein belongs to the ketopantoate reductase family.

It is found in the cytoplasm. It catalyses the reaction (R)-pantoate + NADP(+) = 2-dehydropantoate + NADPH + H(+). It functions in the pathway cofactor biosynthesis; (R)-pantothenate biosynthesis; (R)-pantoate from 3-methyl-2-oxobutanoate: step 2/2. In terms of biological role, catalyzes the NADPH-dependent reduction of ketopantoate into pantoic acid. The polypeptide is 2-dehydropantoate 2-reductase (panE) (Vibrio cholerae serotype O1 (strain ATCC 39315 / El Tor Inaba N16961)).